The chain runs to 390 residues: Chorismate synthase 2 (390 aa).

Residues arginine 39 and arginine 45 each coordinate NADP(+). Residues arginine 132–serine 134, asparagine 253–alanine 254, glycine 298, lysine 313–threonine 317, and arginine 339 each bind FMN.

It belongs to the chorismate synthase family. Homotetramer. It depends on FMNH2 as a cofactor.

The enzyme catalyses 5-O-(1-carboxyvinyl)-3-phosphoshikimate = chorismate + phosphate. It functions in the pathway metabolic intermediate biosynthesis; chorismate biosynthesis; chorismate from D-erythrose 4-phosphate and phosphoenolpyruvate: step 7/7. Its function is as follows. Catalyzes the anti-1,4-elimination of the C-3 phosphate and the C-6 proR hydrogen from 5-enolpyruvylshikimate-3-phosphate (EPSP) to yield chorismate, which is the branch point compound that serves as the starting substrate for the three terminal pathways of aromatic amino acid biosynthesis. This reaction introduces a second double bond into the aromatic ring system. The sequence is that of Chorismate synthase 2 from Bacillus thuringiensis subsp. konkukian (strain 97-27).